A 590-amino-acid polypeptide reads, in one-letter code: Mannosyl-oligosaccharide 1,2-alpha-mannosidase mans-2 (590 aa).

The Cytoplasmic segment spans residues 1–9; sequence MKTVRFNKQ. The chain crosses the membrane as a helical; Signal-anchor for type II membrane protein span at residues 10 to 30; that stretch reads ALAILAACFIFLLCVVCYFSA. The Lumenal portion of the chain corresponds to 31–590; that stretch reads SSESHNAVVV…EAHPVPVLTN (560 aa). The span at 88–102 shows a compositional bias: basic and acidic residues; the sequence is PARVESKPPGEKTST. Residues 88 to 112 are disordered; sequence PARVESKPPGEKTSTEPEETGVGKA. Residues Asn156, Asn212, Asn373, and Asn402 are each glycosylated (N-linked (GlcNAc...) asparagine). A disulfide bridge connects residues Cys423 and Cys456. Catalysis depends on Glu470, which acts as the Proton donor. A Ca(2+)-binding site is contributed by Thr580.

It belongs to the glycosyl hydrolase 47 family. Requires Ca(2+) as cofactor.

The protein localises to the membrane. The enzyme catalyses N(4)-(alpha-D-Man-(1-&gt;2)-alpha-D-Man-(1-&gt;2)-alpha-D-Man-(1-&gt;3)-[alpha-D-Man-(1-&gt;2)-alpha-D-Man-(1-&gt;3)-[alpha-D-Man-(1-&gt;2)-alpha-D-Man-(1-&gt;6)]-alpha-D-Man-(1-&gt;6)]-beta-D-Man-(1-&gt;4)-beta-D-GlcNAc-(1-&gt;4)-beta-D-GlcNAc)-L-asparaginyl-[protein] (N-glucan mannose isomer 9A1,2,3B1,2,3) + 4 H2O = N(4)-(alpha-D-Man-(1-&gt;3)-[alpha-D-Man-(1-&gt;3)-[alpha-D-Man-(1-&gt;6)]-alpha-D-Man-(1-&gt;6)]-beta-D-Man-(1-&gt;4)-beta-D-GlcNAc-(1-&gt;4)-beta-D-GlcNAc)-L-asparaginyl-[protein] (N-glucan mannose isomer 5A1,2) + 4 beta-D-mannose. It carries out the reaction N(4)-(alpha-D-Man-(1-&gt;2)-alpha-D-Man-(1-&gt;2)-alpha-D-Man-(1-&gt;3)-[alpha-D-Man-(1-&gt;3)-[alpha-D-Man-(1-&gt;2)-alpha-D-Man-(1-&gt;6)]-alpha-D-Man-(1-&gt;6)]-beta-D-Man-(1-&gt;4)-beta-D-GlcNAc-(1-&gt;4)-beta-D-GlcNAc)-L-asparaginyl-[protein] (N-glucan mannose isomer 8A1,2,3B1,3) + 3 H2O = N(4)-(alpha-D-Man-(1-&gt;3)-[alpha-D-Man-(1-&gt;3)-[alpha-D-Man-(1-&gt;6)]-alpha-D-Man-(1-&gt;6)]-beta-D-Man-(1-&gt;4)-beta-D-GlcNAc-(1-&gt;4)-beta-D-GlcNAc)-L-asparaginyl-[protein] (N-glucan mannose isomer 5A1,2) + 3 beta-D-mannose. The protein operates within protein modification; protein glycosylation. Its function is as follows. Involved in the maturation of Asn-linked oligosaccharides. Progressively trim alpha-1,2-linked mannose residues from Man(9)GlcNAc(2) to produce Man(5)GlcNAc(2). The protein is Mannosyl-oligosaccharide 1,2-alpha-mannosidase mans-2 of Caenorhabditis elegans.